Consider the following 467-residue polypeptide: UDP-N-acetylmuramate--L-alanine ligase (467 aa).

Residue 114 to 120 participates in ATP binding; sequence GTHGKTT.

The protein belongs to the MurCDEF family.

Its subcellular location is the cytoplasm. The enzyme catalyses UDP-N-acetyl-alpha-D-muramate + L-alanine + ATP = UDP-N-acetyl-alpha-D-muramoyl-L-alanine + ADP + phosphate + H(+). It participates in cell wall biogenesis; peptidoglycan biosynthesis. Cell wall formation. The chain is UDP-N-acetylmuramate--L-alanine ligase from Rhodopseudomonas palustris (strain BisA53).